The chain runs to 187 residues: Interferon beta (187 aa).

Positions 1–21 (MTSRSLLPFVLSLLLPRIIMA) are cleaved as a signal peptide. Y24 carries the phosphotyrosine modification. C53 and C162 are joined by a disulfide. 4 N-linked (GlcNAc...) asparagine glycosylation sites follow: N76, N95, N132, and N158.

Belongs to the alpha/beta interferon family. As to quaternary structure, monomer.

It is found in the secreted. Type I interferon cytokine that plays a key role in the innate immune response to infection, developing tumors and other inflammatory stimuli. Signals via binding to high-affinity (IFNAR2) and low-affinity (IFNAR1) heterodimeric receptor, activating the canonical Jak-STAT signaling pathway resulting in transcriptional activation or repression of interferon-regulated genes that encode the effectors of the interferon response, such as antiviral proteins, regulators of cell proliferation and differentiation, and immunoregulatory proteins. Signals mostly via binding to a IFNAR1-IFNAR2 heterodimeric receptor, but can also function with IFNAR1 alone and independently of Jak-STAT pathways. Elicits a wide variety of responses, including antiviral and antibacterial activities, and can regulate the development of B-cells, myelopoiesis and lipopolysaccharide (LPS)-inducible production of tumor necrosis factor. Plays a role in neuronal homeostasis by regulating dopamine turnover and protecting dopaminergic neurons: acts by promoting neuronal autophagy and alpha-synuclein clearance, thereby preventing dopaminergic neuron loss. IFNB1 is more potent than interferon-alpha (IFN-alpha) in inducing the apoptotic and antiproliferative pathways required for control of tumor cell growth. The protein is Interferon beta (IFNB1) of Tachyglossus aculeatus aculeatus (Southeast Australian short-beaked echidna).